Here is a 230-residue protein sequence, read N- to C-terminus: Ribonuclease 3 (230 aa).

The RNase III domain maps to 1-134; sequence MKQLEELLST…FLGALLLDKG (134 aa). Glu47 serves as a coordination point for Mg(2+). Asp51 is an active-site residue. Residues Asp120 and Glu123 each contribute to the Mg(2+) site. Glu123 is a catalytic residue. The 70-residue stretch at 160–229 folds into the DRBM domain; it reads DYKTCLQEFL…AKNALAQLSE (70 aa).

Belongs to the ribonuclease III family. Homodimer. The cofactor is Mg(2+).

It is found in the cytoplasm. The catalysed reaction is Endonucleolytic cleavage to 5'-phosphomonoester.. Its function is as follows. Digests double-stranded RNA. Involved in the processing of primary rRNA transcript to yield the immediate precursors to the large and small rRNAs (23S and 16S). Processes some mRNAs, and tRNAs when they are encoded in the rRNA operon. Processes pre-crRNA and tracrRNA of type II CRISPR loci if present in the organism. The protein is Ribonuclease 3 of Streptococcus pyogenes serotype M3 (strain SSI-1).